The chain runs to 90 residues: Cell division topological specificity factor (90 aa).

This sequence belongs to the MinE family.

Its function is as follows. Prevents the cell division inhibition by proteins MinC and MinD at internal division sites while permitting inhibition at polar sites. This ensures cell division at the proper site by restricting the formation of a division septum at the midpoint of the long axis of the cell. The chain is Cell division topological specificity factor from Pelotomaculum thermopropionicum (strain DSM 13744 / JCM 10971 / SI).